Reading from the N-terminus, the 327-residue chain is MASTTPNLTAPAVKLNSGYAMPIVGFGLWKVNKETCADQVYNAIRTGYRLFDGACDYGNEVEAGKGVARAIKEGIVRREDLFIVSKLWGTFHDPEHVEPACRRQLSHWGIDYFDLFIVHFPISLKYVDPEVRYPPEWSAPGEKAESGNVPLYKTWGAMEELVDKRLARSIGISNFSPQLIMDLLRYARIRPSTLQIEHHPYLTQEGLIKYAQDEGLVVTAYSSLGPQSFIELENKAATGTTLLLEHPTIKSSAEKHGKTPAQILLRWATQRGIAVIPKSNNPDRLAQNLDATGFNLTANELRAISALDQGLRFNNPPSYGVNFPIFG.

Tyrosine 57 functions as the Proton donor in the catalytic mechanism. Position 119 (histidine 119) interacts with substrate. Residues 173–174, 222–231, and 278–288 contribute to the NAD(+) site; these read SN, SSLGPQSFIE, and KSNNPDRLAQN.

The protein belongs to the aldo/keto reductase family.

The catalysed reaction is xylitol + NAD(+) = D-xylose + NADH + H(+). It carries out the reaction xylitol + NADP(+) = D-xylose + NADPH + H(+). It functions in the pathway carbohydrate metabolism; D-xylose degradation. Catalyzes the initial reaction in the xylose utilization pathway by reducing D-xylose into xylitol. Xylose is a major component of hemicelluloses such as xylan. Most fungi utilize D-xylose via three enzymatic reactions, xylose reductase (XR), xylitol dehydrogenase (XDH), and xylulokinase, to form xylulose 5-phosphate, which enters pentose phosphate pathway. This is Probable NAD(P)H-dependent D-xylose reductase xyl1 (xyl1) from Arthroderma otae (strain ATCC MYA-4605 / CBS 113480) (Microsporum canis).